The primary structure comprises 199 residues: Pyridoxine/pyridoxamine 5'-phosphate oxidase (199 aa).

FMN is bound by residues 44-49 (RTVLLK), 59-60 (YT), K66, and Q91. K49 contributes to the substrate binding site. Y109, R113, and S117 together coordinate substrate. FMN-binding positions include 126–127 (QS) and W171. 177–179 (RLH) contributes to the substrate binding site. Residue R181 participates in FMN binding.

Belongs to the pyridoxamine 5'-phosphate oxidase family. Homodimer. It depends on FMN as a cofactor.

The catalysed reaction is pyridoxamine 5'-phosphate + O2 + H2O = pyridoxal 5'-phosphate + H2O2 + NH4(+). It carries out the reaction pyridoxine 5'-phosphate + O2 = pyridoxal 5'-phosphate + H2O2. It functions in the pathway cofactor metabolism; pyridoxal 5'-phosphate salvage; pyridoxal 5'-phosphate from pyridoxamine 5'-phosphate: step 1/1. Its pathway is cofactor metabolism; pyridoxal 5'-phosphate salvage; pyridoxal 5'-phosphate from pyridoxine 5'-phosphate: step 1/1. Its function is as follows. Catalyzes the oxidation of either pyridoxine 5'-phosphate (PNP) or pyridoxamine 5'-phosphate (PMP) into pyridoxal 5'-phosphate (PLP). The protein is Pyridoxine/pyridoxamine 5'-phosphate oxidase of Xanthomonas euvesicatoria pv. vesicatoria (strain 85-10) (Xanthomonas campestris pv. vesicatoria).